The sequence spans 239 residues: Phosducin-like protein 3 (239 aa).

The residue at position 1 (methionine 1) is an N-acetylmethionine. The Phosducin domain maps to 32 to 180 (EAEEEQRILQ…EGDIKAQFIG (149 aa)). Phosphoserine is present on serine 43. The thioredoxin fold stretch occupies residues 91 to 239 (FGEVLEISGK…MKRDSDSEGD (149 aa)). Interaction with XIAP regions lie at residues 97–99 (ISG) and 153–155 (TCI). 2 positions are modified to phosphoserine: serine 234 and serine 236.

It belongs to the phosducin family. Interacts (via thioredoxin fold region) with KDR/VEGFR2 (via juxtamembrane domain). Forms ternary complexes with the chaperonin CCT complex and actin substrate, leading to inhibition of actin folding. Interacts with XIAP (via BIR 3 and RING domain). Interacts with HSP90AA1 and HSP90AB1. N-terminal methionine acetylation destabilizes the protein. Expressed in endothelial cells (at protein level). Expressed in all tissues examined including spleen, thymus, prostate, testis, ovary, small intestine and colon.

The protein resides in the cytoplasm. The protein localises to the perinuclear region. It is found in the endoplasmic reticulum. Acts as a chaperone for the angiogenic VEGF receptor KDR/VEGFR2, increasing its abundance by inhibiting its ubiquitination and degradation. Inhibits the folding activity of the chaperonin-containing T-complex (CCT) which leads to inhibition of cytoskeletal actin folding. Acts as a chaperone during heat shock alongside HSP90 and HSP40/70 chaperone complexes. Modulates the activation of caspases during apoptosis. The sequence is that of Phosducin-like protein 3 (PDCL3) from Homo sapiens (Human).